A 254-amino-acid polypeptide reads, in one-letter code: Ciliary microtubule associated protein 1A (254 aa).

2 STPGR repeats span residues P180–R205 and P216–K241. The interval E207–L228 is disordered.

This sequence belongs to the CIMAP family. Microtubule inner protein component of sperm flagellar doublet microtubules. Testis-specific (at protein level). Expression restricted to the germ cell fraction, absent in somatic cell fractions such as Sertoli and Leydig cells. Expression detected in the third week postpartum (23 days) after haploid germ cells developed, expression increased with age. Expressed in the tails of elongated spermatids sticking out toward the tubular lumen, and in cytoplasmic droplets still attached to the spermatid tail membrane. Expressed in the tails of mature sperm, from the connecting piece proximal to the head, along the middle and principal pieces, down to the distal end piece.

Its subcellular location is the cytoplasm. It localises to the cytoskeleton. The protein localises to the flagellum axoneme. Outer dense fibers are filamentous structures located on the outside of the axoneme in the midpiece and principal piece of the mammalian sperm tail. May help to maintain the passive elastic structures and elastic recoil of the sperm tail. In Mus musculus (Mouse), this protein is Ciliary microtubule associated protein 1A (Cimap1a).